Consider the following 270-residue polypeptide: Putative pyruvate, phosphate dikinase regulatory protein (270 aa).

148 to 155 (GISRTSKT) lines the ADP pocket.

The protein belongs to the pyruvate, phosphate/water dikinase regulatory protein family. PDRP subfamily.

The catalysed reaction is N(tele)-phospho-L-histidyl/L-threonyl-[pyruvate, phosphate dikinase] + ADP = N(tele)-phospho-L-histidyl/O-phospho-L-threonyl-[pyruvate, phosphate dikinase] + AMP + H(+). The enzyme catalyses N(tele)-phospho-L-histidyl/O-phospho-L-threonyl-[pyruvate, phosphate dikinase] + phosphate + H(+) = N(tele)-phospho-L-histidyl/L-threonyl-[pyruvate, phosphate dikinase] + diphosphate. Its function is as follows. Bifunctional serine/threonine kinase and phosphorylase involved in the regulation of the pyruvate, phosphate dikinase (PPDK) by catalyzing its phosphorylation/dephosphorylation. The sequence is that of Putative pyruvate, phosphate dikinase regulatory protein from Bacillus cereus (strain 03BB102).